The primary structure comprises 616 residues: Chaperone protein HscA (616 aa).

Belongs to the heat shock protein 70 family.

Its function is as follows. Chaperone involved in the maturation of iron-sulfur cluster-containing proteins. Has a low intrinsic ATPase activity which is markedly stimulated by HscB. Involved in the maturation of IscU. This Enterobacter sp. (strain 638) protein is Chaperone protein HscA.